A 169-amino-acid polypeptide reads, in one-letter code: Allophycocyanin subunit beta-18 (169 aa).

An N4-methylasparagine modification is found at N72. C82 lines the (2R,3E)-phycocyanobilin pocket.

It belongs to the phycobiliprotein family. In terms of assembly, heterodimer of an alpha and a beta chain. Post-translationally, contains one covalently linked bilin chromophore.

Its subcellular location is the plastid. It localises to the chloroplast thylakoid membrane. Light-harvesting photosynthetic bile pigment-protein from the phycobiliprotein complex. Allophycocyanin has a maximum absorption at approximately 650 nanometers. In Pyropia yezoensis (Susabi-nori), this protein is Allophycocyanin subunit beta-18 (apcF).